The sequence spans 117 residues: U9-theraphotoxin-Hhn1a (117 aa).

The first 21 residues, 1–21, serve as a signal peptide directing secretion; it reads MNTVRVTFLLVFVLAVSLGQA. Positions 22 to 75 are excised as a propeptide; that stretch reads DEDGNRMEMRQEIEKTEADSSYFAENLLLQKLEELEAKLWEETSEESRNSRQKR. 3 disulfides stabilise this stretch: cysteine 76–cysteine 94, cysteine 83–cysteine 99, and cysteine 93–cysteine 114.

Belongs to the neurotoxin 14 (magi-1) family. 01 (HNTX-16) subfamily. Expressed by the venom gland.

Its subcellular location is the secreted. Its function is as follows. Probable ion channel inhibitor. The polypeptide is U9-theraphotoxin-Hhn1a (Cyriopagopus hainanus (Chinese bird spider)).